The primary structure comprises 195 residues: MRVAEVVRNTSETQIRVKLDLDGTGRQKLATGVPFLDHMLDQIARHGLIDLEVEAHGDTHIDDHHTVEDVGITLGQAVAKAVGDKKGIRRYGHSYVPLDEALSRVVIDFSGRPGLEFHVPFTRARIGTFDVDLSIEFFRGFVNHAGVTLHIDNLRGINAHHQLETVFKAFGRALRAAVELDERAAGQIPSTKGSL.

Belongs to the imidazoleglycerol-phosphate dehydratase family.

The protein resides in the cytoplasm. The catalysed reaction is D-erythro-1-(imidazol-4-yl)glycerol 3-phosphate = 3-(imidazol-4-yl)-2-oxopropyl phosphate + H2O. The protein operates within amino-acid biosynthesis; L-histidine biosynthesis; L-histidine from 5-phospho-alpha-D-ribose 1-diphosphate: step 6/9. In Burkholderia vietnamiensis (strain G4 / LMG 22486) (Burkholderia cepacia (strain R1808)), this protein is Imidazoleglycerol-phosphate dehydratase.